The primary structure comprises 785 residues: B-cell scaffold protein with ankyrin repeats (785 aa).

The interval 1-154 is interaction with ITPR2; it reads MLPAAPGKGL…DYISVIQSII (154 aa). Positions 25 to 153 constitute a TIR domain; that stretch reads NTKDIIMIYE…EDYISVIQSI (129 aa). A DBB domain is found at 200–327; the sequence is VLPTEIPCEN…EIPYYEFQSL (128 aa). ANK repeat units follow at residues 342-371 and 378-408; these read ELPT…ATWA and EGSD…EIDI. Disordered stretches follow at residues 433 to 480, 493 to 514, 538 to 578, and 606 to 625; these read PAFH…SESS, GADP…LPPP, QMER…EDPY, and FIIN…PPKE. The segment covering 553-568 has biased composition (basic and acidic residues); sequence ETGDEPKGEKEKKEEE. Residues 569 to 578 show a composition bias toward acidic residues; the sequence is KEQEEEEDPY. The span at 611–621 shows a compositional bias: pro residues; the sequence is PPAPTPRPTSI.

Interacts with LYN, ITPR1 and ITPR2. In terms of processing, phosphorylated on tyrosines upon BCR activation. In terms of tissue distribution, expressed in B-cell but not T-cell or myeloid cell lines. Highest expression in CD19(+) B-cells, with very low expression in other cell populations.

In terms of biological role, involved in B-cell receptor (BCR)-induced Ca(2+) mobilization from intracellular stores. Promotes Lyn-mediated phosphorylation of IP3 receptors 1 and 2. This Homo sapiens (Human) protein is B-cell scaffold protein with ankyrin repeats (BANK1).